The primary structure comprises 355 residues: Molybdenum import ATP-binding protein ModC (355 aa).

The ABC transporter domain maps to 1–233; sequence MTLIVEAKQR…PSAAADRKEA (233 aa). 31–38 is an ATP binding site; that stretch reads GRSGSGKT. A Mop domain is found at 291–355; it reads GLSALNILEG…AIIKTVALEG (65 aa).

This sequence belongs to the ABC transporter superfamily. Molybdate importer (TC 3.A.1.8) family. As to quaternary structure, the complex is composed of two ATP-binding proteins (ModC), two transmembrane proteins (ModB) and a solute-binding protein (ModA).

The protein localises to the cell inner membrane. It catalyses the reaction molybdate(out) + ATP + H2O = molybdate(in) + ADP + phosphate + H(+). Part of the ABC transporter complex ModABC involved in molybdenum import. Responsible for energy coupling to the transport system. In Rhizobium etli (strain ATCC 51251 / DSM 11541 / JCM 21823 / NBRC 15573 / CFN 42), this protein is Molybdenum import ATP-binding protein ModC.